The following is a 164-amino-acid chain: Choriogonadotropin subunit beta (164 aa).

An N-terminal signal peptide occupies residues 1–20 (MEMLQGLLLCLLLSTGGAWA). Cystine bridges form between Cys29/Cys77, Cys43/Cys92, Cys46/Cys130, Cys54/Cys108, Cys58/Cys110, and Cys113/Cys120. Asn50 carries N-linked (GlcNAc...) asparagine glycosylation. The disordered stretch occupies residues 135-164 (FQDSSSKDPPRNLTSPSQLLEPADPPLVPQ). An O-linked (GalNAc...) serine glycan is attached at Ser140. The N-linked (GlcNAc...) asparagine glycan is linked to Asn146. Ser151 carries an O-linked (GalNAc...) serine glycan.

It belongs to the glycoprotein hormones subunit beta family. In terms of assembly, heterodimer of a common alpha chain and a unique beta chain which confers biological specificity to thyrotropin, lutropin, follitropin and gonadotropin. Placenta.

Its subcellular location is the secreted. Stimulates the ovaries to synthesize the steroids that are essential for the maintenance of pregnancy. The protein is Choriogonadotropin subunit beta (CGB) of Callithrix jacchus (White-tufted-ear marmoset).